A 2135-amino-acid chain; its full sequence is Protein SUBSTANDARD STARCH GRAIN 4, chloroplastic (2135 aa).

2 stretches are compositionally biased toward low complexity: residues 1–10 and 72–84; these read MSHCLRASPF and QHQP…RQQQ. Residues 1–42 constitute a chloroplast transit peptide; that stretch reads MSHCLRASPFLSPPPPLLHPSRRRRHRQGGCIHTSPGTRPLV. Disordered regions lie at residues 1–44 and 58–89; these read MSHC…LVAR and SDSS…PPPP. Residues 43–104 are Stromal-facing; sequence ARARFDPPPL…ASLAPLWREG (62 aa). Residues 105–125 form a helical membrane-spanning segment; that stretch reads LFLVRCSVFAAALSVAAALSW. Over 126–2135 the chain is Chloroplast intermembrane; sequence YAQLRARSFV…LFEYSATSQG (2010 aa). Over residues 361 to 370 the composition is skewed to basic residues; that stretch reads RRRYRRKAHS. Disordered stretches follow at residues 361 to 382, 401 to 492, and 1843 to 1869; these read RRRY…SSQQ, SGNP…QVSE, and FLGS…SFKP. Composition is skewed to polar residues over residues 373-382, 454-490, and 1846-1856; these read ISDTDNSSQQ, NFAS…NEQV, and SLSTSPDGQQS. Residues 1857–1866 are compositionally biased toward basic and acidic residues; the sequence is ETERTPEHGS.

Belongs to the TamB family. As to quaternary structure, part of the TIC complex, which can interact with components of the TOC complex to form a larger import complex. As to expression, highly expressed in third leaf and developing seeds. Expressed in anthers, pistils, flag leaves and young panicles.

The protein localises to the plastid. Its subcellular location is the chloroplast inner membrane. The protein resides in the chloroplast intermembrane space. It is found in the chloroplast. It localises to the amyloplast. In terms of biological role, part of the inner chloroplast membrane translocon complex (TIC) which associates with the outer chloroplast membrane translocon complex (TOC) and forms a supercomplex involved in protein precursor import into the chloroplast stroma. Required for the regulation of starch granule size in amyloplasts. The sequence is that of Protein SUBSTANDARD STARCH GRAIN 4, chloroplastic from Oryza sativa subsp. japonica (Rice).